Here is a 767-residue protein sequence, read N- to C-terminus: Tetratricopeptide repeat protein 16 (767 aa).

9 TPR repeats span residues 18–51 (VREYYNQGHQCLLQEDWEMSVLFFSRALHLDPKL), 53–85 (DFYVFRAEAFIQLCDFSSALQNLRRAYSYDPGN), 93–126 (AFVLYLQGQCLYELCDFQEALCVFLQASDLQPQN), 128–155 (SFSYRCMACLLALKRYHDCLALITREVK), 208–241 (AKQSLQDASTLAVQGKVHRALKCINCAIENNPLD), 242–275 (PNFFFFRGTLRRRLQQFDHAVEDFLKAMDMVTDT), 288–321 (LLTYNDFAVHCYNHGAYQEGVLLLNKAIRDEQNE), 322–355 (KGLYINRGDCFFQLGNLAFAEADYKQALALSPLD), and 363–396 (GVLQEKLGFCQQKHRQFQTAEEHFSEAIRHSPQK). A disordered region spans residues 612–733 (EVTPAYGQRD…DSLSFSEISS (122 aa)). Residues 684-718 (QRSSQKVTKTPSLTHSTTHSDIGESANDTPGQTPW) show a composition bias toward polar residues.

The polypeptide is Tetratricopeptide repeat protein 16 (Ttc16) (Mus musculus (Mouse)).